The chain runs to 279 residues: Putative pyruvate, phosphate dikinase regulatory protein (279 aa).

153–160 (GVSRTSKT) contributes to the ADP binding site.

Belongs to the pyruvate, phosphate/water dikinase regulatory protein family. PDRP subfamily.

It carries out the reaction N(tele)-phospho-L-histidyl/L-threonyl-[pyruvate, phosphate dikinase] + ADP = N(tele)-phospho-L-histidyl/O-phospho-L-threonyl-[pyruvate, phosphate dikinase] + AMP + H(+). The catalysed reaction is N(tele)-phospho-L-histidyl/O-phospho-L-threonyl-[pyruvate, phosphate dikinase] + phosphate + H(+) = N(tele)-phospho-L-histidyl/L-threonyl-[pyruvate, phosphate dikinase] + diphosphate. Bifunctional serine/threonine kinase and phosphorylase involved in the regulation of the pyruvate, phosphate dikinase (PPDK) by catalyzing its phosphorylation/dephosphorylation. This Rhodopseudomonas palustris (strain ATCC BAA-98 / CGA009) protein is Putative pyruvate, phosphate dikinase regulatory protein.